Consider the following 133-residue polypeptide: Arsenate reductase 1 (133 aa).

Catalysis depends on nucleophile residues C10, C82, and C89. Intrachain disulfides connect C10/C82 and C82/C89.

This sequence belongs to the low molecular weight phosphotyrosine protein phosphatase family. Thioredoxin-coupled ArsC subfamily.

Its subcellular location is the cytoplasm. The catalysed reaction is arsenate + [thioredoxin]-dithiol + H(+) = arsenite + [thioredoxin]-disulfide + H2O. Catalyzes the reduction of arsenate [As(V)] to arsenite [As(III)]. In Staphylococcus haemolyticus (strain JCSC1435), this protein is Arsenate reductase 1.